We begin with the raw amino-acid sequence, 286 residues long: ATP synthase gamma chain (286 aa).

The protein belongs to the ATPase gamma chain family. As to quaternary structure, F-type ATPases have 2 components, CF(1) - the catalytic core - and CF(0) - the membrane proton channel. CF(1) has five subunits: alpha(3), beta(3), gamma(1), delta(1), epsilon(1). CF(0) has three main subunits: a, b and c.

Its subcellular location is the cell membrane. Produces ATP from ADP in the presence of a proton gradient across the membrane. The gamma chain is believed to be important in regulating ATPase activity and the flow of protons through the CF(0) complex. The chain is ATP synthase gamma chain from Bacillus cereus (strain G9842).